Reading from the N-terminus, the 257-residue chain is Ditrans,polycis-undecaprenyl-diphosphate synthase ((2E,6E)-farnesyl-diphosphate specific) (257 aa).

Residue D34 is part of the active site. D34 provides a ligand contact to Mg(2+). Residues 35 to 38, W39, R47, and H51 contribute to the substrate site; that span reads GNGR. The active-site Proton acceptor is the N82. Residues W83, R85, R201, and 207 to 209 contribute to the substrate site; that span reads RLS. E220 lines the Mg(2+) pocket.

This sequence belongs to the UPP synthase family. Homodimer. It depends on Mg(2+) as a cofactor.

It carries out the reaction 8 isopentenyl diphosphate + (2E,6E)-farnesyl diphosphate = di-trans,octa-cis-undecaprenyl diphosphate + 8 diphosphate. Functionally, catalyzes the sequential condensation of isopentenyl diphosphate (IPP) with (2E,6E)-farnesyl diphosphate (E,E-FPP) to yield (2Z,6Z,10Z,14Z,18Z,22Z,26Z,30Z,34E,38E)-undecaprenyl diphosphate (di-trans,octa-cis-UPP). UPP is the precursor of glycosyl carrier lipid in the biosynthesis of bacterial cell wall polysaccharide components such as peptidoglycan and lipopolysaccharide. This Francisella tularensis subsp. tularensis (strain SCHU S4 / Schu 4) protein is Ditrans,polycis-undecaprenyl-diphosphate synthase ((2E,6E)-farnesyl-diphosphate specific).